Reading from the N-terminus, the 190-residue chain is Thymidylate kinase (190 aa).

7 to 14 serves as a coordination point for ATP; the sequence is GVDTCGKS.

Belongs to the thymidylate kinase family.

The catalysed reaction is dTMP + ATP = dTDP + ADP. Phosphorylation of dTMP to form dTDP in both de novo and salvage pathways of dTTP synthesis. The polypeptide is Thymidylate kinase (Wolinella succinogenes (strain ATCC 29543 / DSM 1740 / CCUG 13145 / JCM 31913 / LMG 7466 / NCTC 11488 / FDC 602W) (Vibrio succinogenes)).